The sequence spans 308 residues: Polyprenal reductase (308 aa).

At 1–2 (MT) the chain is on the cytoplasmic side. Residues 3–23 (LLALVWLLLDATFLITLLWHL) traverse the membrane as a helical segment. Residues 24-65 (LQGCKSGHSLLCSVFQDLIRYGKTKTGLQRPAWLQWFDIPKR) are Lumenal-facing. Residues 66–86 (CFWHFYCVSLIWNGCLLWILL) traverse the membrane as a helical segment. The Cytoplasmic segment spans residues 87–120 (RLLLQSVPVPEWLQLVLHFLHAGSEPQILDRELS). The helical transmembrane segment at 121 to 141 (VILALALLWLHSLRRLLECLF) threads the bilayer. At 142–148 (VSVFSNG) the chain is on the lumenal side. The chain crosses the membrane as a helical span at residues 149–169 (VIHLVQYCFGLGYYFLIGITV). Residues 170 to 184 (LTYCPLDRRTVSTDN) are Cytoplasmic-facing. The helical transmembrane segment at 185–205 (LLTQCHWYHILGLALYIWASL) threads the bilayer. The Lumenal portion of the chain corresponds to 206-255 (HQYRCHCILAGLRKSASGNVINLNHSVPCGDWFERVSCPHYFAELLIYVS). The chain crosses the membrane as a helical span at residues 256–276 (IAVVFGLLNTIWWLVVLYVLL). Topologically, residues 277-308 (NQALAALLCHEFYHEKFDTYPIHRKAFIPFIF) are cytoplasmic.

It belongs to the steroid 5-alpha reductase family. Polyprenal reductase subfamily.

It is found in the endoplasmic reticulum membrane. It catalyses the reaction a di-trans,poly-cis-dolichal + NADP(+) = a di-trans,poly-cis-polyprenal + NADPH + H(+). The catalysed reaction is a 3-oxo-5alpha-steroid + NADP(+) = a 3-oxo-Delta(4)-steroid + NADPH + H(+). It carries out the reaction androst-4-ene-3,17-dione + NADPH + H(+) = 5alpha-androstan-3,17-dione + NADP(+). The enzyme catalyses 17beta-hydroxy-5alpha-androstan-3-one + NADP(+) = testosterone + NADPH + H(+). It functions in the pathway protein modification; protein glycosylation. Plays a key role in early steps of protein N-linked glycosylation by being involved in the conversion of polyprenol into dolichol. Acts as a polyprenal reductase that mediates the reduction of polyprenal into dolichal in a NADP-dependent mechanism. Dolichols are required for the synthesis of dolichol-linked monosaccharides and the oligosaccharide precursor used for N-glycosylation. Also able to convert testosterone (T) into 5-alpha-dihydrotestosterone (DHT). This chain is Polyprenal reductase (srd5a3), found in Xenopus tropicalis (Western clawed frog).